The following is a 370-amino-acid chain: Mitogen-activated protein kinase 3 (370 aa).

The 287-residue stretch at 38 to 324 (RPPIIPIGRG…VEQALNHQYL (287 aa)) folds into the Protein kinase domain. ATP-binding positions include 44–52 (IGRGAYGIV) and Lys-67. Catalysis depends on Asp-164, which acts as the Proton acceptor. A Phosphothreonine modification is found at Thr-196. Positions 196-198 (TEY) match the TXY motif. Tyr-198 carries the post-translational modification Phosphotyrosine. Thr-201 carries the post-translational modification Phosphothreonine.

The protein belongs to the protein kinase superfamily. CMGC Ser/Thr protein kinase family. MAP kinase subfamily. In terms of assembly, interacts with DSPTP1B/MKP2, NDPK2 and VIP1. The interaction with DSPTP1B/MKP2 is repressed by fungal elicitation. Binds to LIP5. Interacts with VQ4. Interacts with RACK1A, RACK1B and RACK1C. Interacts with FLZ9. Interacts with MKK5. Post-translationally, dually phosphorylated on Thr-196 and Tyr-198, which activates the enzyme. Dephosphorylated by DSPTP1B/MKP2.

The protein resides in the cytoplasm. The protein localises to the nucleus. It is found in the cell cortex. It catalyses the reaction L-seryl-[protein] + ATP = O-phospho-L-seryl-[protein] + ADP + H(+). The enzyme catalyses L-threonyl-[protein] + ATP = O-phospho-L-threonyl-[protein] + ADP + H(+). With respect to regulation, activated by threonine and tyrosine phosphorylation. Activated by MAP kinase kinases MKK4, MKK5, MKK7 and MKK9. Activated in response to hydrogen peroxide, ozone, salt stress and flagellin bacterial elicitor. Triggered by Agrobacterium upon T-DNA transfer. Repressed by DSPTP1B/MKP2-mediated dephosphorylation. Involved in oxidative stress-mediated signaling cascade (such as ozone). Involved in the innate immune MAP kinase signaling cascade (MEKK1, MKK4/MKK5 and MPK3/MPK6) downstream of bacterial flagellin receptor FLS2. May be involved in hypersensitive response (HR)-mediated signaling cascade by modulating LIP5 phosphorylation and subsequent multivesicular bodies (MVBs) trafficking. May phosphorylate regulators of WRKY transcription factors. Mediates the phosphorylation of VIP1 and subsequent stress genes transcription in response to Agrobacterium. MKK9-MPK3/MPK6 module phosphorylates and activates EIN3, leading to the promotion of EIN3-mediated transcription in ethylene signaling. MPK3/MPK6 cascade regulates camalexin synthesis through transcriptional regulation of the biosynthetic genes after pathogen infection. YDA-MKK4/MKK5-MPK3/MPK6 module regulates stomatal cell fate before the guard mother cell (GMC) is specified. When activated, reinforces the feedback loop by phosphorylating BASL, and inhibits stomatal fate by phosphorylating SPCH. This MAPK cascade also functions downstream of the ER receptor in regulating coordinated local cell proliferation, which shapes the morphology of plant organs. This chain is Mitogen-activated protein kinase 3, found in Arabidopsis thaliana (Mouse-ear cress).